The sequence spans 265 residues: Polyphosphate glucokinase (265 aa).

Residues 1–18 are compositionally biased toward polar residues; sequence MTSTGPETSETPGATTQR. The disordered stretch occupies residues 1-22; it reads MTSTGPETSETPGATTQRHGFG. An ATP-binding site is contributed by 24–29; that stretch reads DVGGSG.

It belongs to the ROK (NagC/XylR) family. In terms of assembly, homodimer.

The enzyme catalyses [phosphate](n) + D-glucose = [phosphate](n-1) + D-glucose 6-phosphate + H(+). The catalysed reaction is D-glucose + ATP = D-glucose 6-phosphate + ADP + H(+). In terms of biological role, catalyzes the phosphorylation of glucose using polyphosphate or ATP as the phosphoryl donor. Polyphosphate, rather than ATP, seems to be the major phosphate donor for the enzyme in M.tuberculosis. GTP, UTP and CTP can replace ATP as phosphoryl donor. The polypeptide is Polyphosphate glucokinase (ppgK) (Mycobacterium tuberculosis (strain ATCC 25177 / H37Ra)).